The primary structure comprises 393 residues: Phosphoglycerate kinase (393 aa).

Substrate is bound by residues 22–24 (DFN), Arg-37, 60–63 (HLGR), Arg-119, and Arg-152. ATP is bound by residues Lys-202, Gly-293, Glu-324, and 350–353 (GGDS).

The protein belongs to the phosphoglycerate kinase family. As to quaternary structure, monomer.

The protein localises to the cytoplasm. The catalysed reaction is (2R)-3-phosphoglycerate + ATP = (2R)-3-phospho-glyceroyl phosphate + ADP. It functions in the pathway carbohydrate degradation; glycolysis; pyruvate from D-glyceraldehyde 3-phosphate: step 2/5. This is Phosphoglycerate kinase from Borrelia garinii subsp. bavariensis (strain ATCC BAA-2496 / DSM 23469 / PBi) (Borreliella bavariensis).